The primary structure comprises 139 residues: D-ribose pyranase (139 aa).

His-20 functions as the Proton donor in the catalytic mechanism. Substrate contacts are provided by residues Asp-28, His-106, and 128 to 130 (YAN).

It belongs to the RbsD / FucU family. RbsD subfamily. As to quaternary structure, homodecamer.

The protein localises to the cytoplasm. It carries out the reaction beta-D-ribopyranose = beta-D-ribofuranose. It participates in carbohydrate metabolism; D-ribose degradation; D-ribose 5-phosphate from beta-D-ribopyranose: step 1/2. Catalyzes the interconversion of beta-pyran and beta-furan forms of D-ribose. This is D-ribose pyranase from Cronobacter sakazakii (strain ATCC BAA-894) (Enterobacter sakazakii).